Reading from the N-terminus, the 214-residue chain is Pyridoxine/pyridoxamine 5'-phosphate oxidase (214 aa).

Substrate contacts are provided by residues R9–Y12 and K67. Residues R62–K67, Y77–S78, R83, K84, and Q106 contribute to the FMN site. Substrate contacts are provided by Y124, R128, and S132. Residues Q141–S142 and W186 each bind FMN. R192 to H194 is a binding site for substrate. Position 196 (R196) interacts with FMN.

Belongs to the pyridoxamine 5'-phosphate oxidase family. As to quaternary structure, homodimer. It depends on FMN as a cofactor.

It carries out the reaction pyridoxamine 5'-phosphate + O2 + H2O = pyridoxal 5'-phosphate + H2O2 + NH4(+). It catalyses the reaction pyridoxine 5'-phosphate + O2 = pyridoxal 5'-phosphate + H2O2. The protein operates within cofactor metabolism; pyridoxal 5'-phosphate salvage; pyridoxal 5'-phosphate from pyridoxamine 5'-phosphate: step 1/1. It functions in the pathway cofactor metabolism; pyridoxal 5'-phosphate salvage; pyridoxal 5'-phosphate from pyridoxine 5'-phosphate: step 1/1. Its function is as follows. Catalyzes the oxidation of either pyridoxine 5'-phosphate (PNP) or pyridoxamine 5'-phosphate (PMP) into pyridoxal 5'-phosphate (PLP). The chain is Pyridoxine/pyridoxamine 5'-phosphate oxidase from Porphyromonas gingivalis (strain ATCC BAA-308 / W83).